A 172-amino-acid polypeptide reads, in one-letter code: Adenine phosphoribosyltransferase (172 aa).

The protein belongs to the purine/pyrimidine phosphoribosyltransferase family. As to quaternary structure, homodimer.

It is found in the cytoplasm. It catalyses the reaction AMP + diphosphate = 5-phospho-alpha-D-ribose 1-diphosphate + adenine. Its pathway is purine metabolism; AMP biosynthesis via salvage pathway; AMP from adenine: step 1/1. In terms of biological role, catalyzes a salvage reaction resulting in the formation of AMP, that is energically less costly than de novo synthesis. The chain is Adenine phosphoribosyltransferase from Staphylococcus saprophyticus subsp. saprophyticus (strain ATCC 15305 / DSM 20229 / NCIMB 8711 / NCTC 7292 / S-41).